The sequence spans 179 residues: Ribosome maturation factor RimM (179 aa).

Residues 95–174 (KDEFFYFDIL…QIFCTQDAFL (80 aa)) enclose the PRC barrel domain.

Belongs to the RimM family. As to quaternary structure, binds ribosomal protein uS19.

The protein resides in the cytoplasm. Its function is as follows. An accessory protein needed during the final step in the assembly of 30S ribosomal subunit, possibly for assembly of the head region. Essential for efficient processing of 16S rRNA. May be needed both before and after RbfA during the maturation of 16S rRNA. It has affinity for free ribosomal 30S subunits but not for 70S ribosomes. In Campylobacter jejuni subsp. doylei (strain ATCC BAA-1458 / RM4099 / 269.97), this protein is Ribosome maturation factor RimM.